A 102-amino-acid polypeptide reads, in one-letter code: Carboxysome shell protein CcmK2 (102 aa).

A BMC domain is found at 4-90; the sequence is AVGMIETRGF…PHENLEYVLP (87 aa).

This sequence belongs to the bacterial microcompartments protein family. CcmK subfamily. In terms of assembly, homohexamer. Stacked hexamers, with the concave faces together, have also been crystallized. Interacts preferentially with itself, then with CcmK1 and CcmK4a in vitro. May interact with CcmL, this occurs at very high CcmK2 concentrations. Interacts with CcmN and CcmO in the carboxysome.

The protein localises to the carboxysome. In terms of biological role, probably the major shell protein of the carboxysome, a polyhedral inclusion where RuBisCO (ribulose bisphosphate carboxylase, rbcL-rbcS) is sequestered. Assembles into hexamers which make sheets that form the facets of the polyhedral carboxysome. The hexamer central pore probably regulates metabolite flux. This is Carboxysome shell protein CcmK2 from Thermosynechococcus vestitus (strain NIES-2133 / IAM M-273 / BP-1).